A 145-amino-acid polypeptide reads, in one-letter code: Leptin (145 aa).

The N-terminal stretch at 1-12 (LWLWPYLFFIEA) is a signal peptide.

This sequence belongs to the leptin family.

It is found in the secreted. Functionally, key player in the regulation of energy balance and body weight control. Once released into the circulation, has central and peripheral effects by binding LEPR, found in many tissues, which results in the activation of several major signaling pathways. In the hypothalamus, acts as an appetite-regulating factor that induces a decrease in food intake and an increase in energy consumption by inducing anorexinogenic factors and suppressing orexigenic neuropeptides, also regulates bone mass and secretion of hypothalamo-pituitary-adrenal hormones. In the periphery, increases basal metabolism, influences reproductive function, regulates pancreatic beta-cell function and insulin secretion, is pro-angiogenic for endothelial cell and affects innate and adaptive immunity. In the arcuate nucleus of the hypothalamus, activates by depolarization POMC neurons inducing FOS and SOCS3 expression to release anorexigenic peptides and inhibits by hyperpolarization NPY neurons inducing SOCS3 with a consequent reduction on release of orexigenic peptides. In addition to its known satiety inducing effect, has a modulatory role in nutrient absorption. In the intestine, reduces glucose absorption by enterocytes by activating PKC and leading to a sequential activation of p38, PI3K and ERK signaling pathways which exerts an inhibitory effect on glucose absorption. Acts as a growth factor on certain tissues, through the activation of different signaling pathways increases expression of genes involved in cell cycle regulation such as CCND1, via JAK2-STAT3 pathway, or VEGFA, via MAPK1/3 and PI3K-AKT1 pathways. May also play an apoptotic role via JAK2-STAT3 pathway and up-regulation of BIRC5 expression. Pro-angiogenic, has mitogenic activity on vascular endothelial cells and plays a role in matrix remodeling by regulating the expression of matrix metalloproteinases (MMPs) and tissue inhibitors of metalloproteinases (TIMPs). In innate immunity, modulates the activity and function of neutrophils by increasing chemotaxis and the secretion of oxygen radicals. Increases phagocytosis by macrophages and enhances secretion of pro-inflammatory mediators. Increases cytotoxic ability of NK cells. Plays a pro-inflammatory role, in synergy with IL1B, by inducing NOS2 which promotes the production of IL6, IL8 and Prostaglandin E2, through a signaling pathway that involves JAK2, PI3K, MAP2K1/MEK1 and MAPK14/p38. In adaptive immunity, promotes the switch of memory T-cells towards T helper-1 cell immune responses. Increases CD4(+)CD25(-) T-cell proliferation and reduces autophagy during TCR (T-cell receptor) stimulation, through MTOR signaling pathway activation and BCL2 up-regulation. The protein is Leptin (LEP) of Equus caballus (Horse).